Reading from the N-terminus, the 235-residue chain is Type III pantothenate kinase (235 aa).

Residue 6-13 (DVGNTSLK) coordinates ATP. Substrate-binding positions include Y79 and 86 to 89 (GIDR). The Proton acceptor role is filled by D88. D109 lines the K(+) pocket. T112 contacts ATP. T164 lines the substrate pocket.

It belongs to the type III pantothenate kinase family. As to quaternary structure, homodimer. The cofactor is NH4(+). It depends on K(+) as a cofactor.

The protein localises to the cytoplasm. It catalyses the reaction (R)-pantothenate + ATP = (R)-4'-phosphopantothenate + ADP + H(+). The protein operates within cofactor biosynthesis; coenzyme A biosynthesis; CoA from (R)-pantothenate: step 1/5. Functionally, catalyzes the phosphorylation of pantothenate (Pan), the first step in CoA biosynthesis. In Pseudoalteromonas translucida (strain TAC 125), this protein is Type III pantothenate kinase.